The chain runs to 384 residues: Ceramide very long chain fatty acid hydroxylase SCS7 (384 aa).

The Cytoplasmic segment spans residues 1–197 (MSTNTSKTLE…NFLEPLTKTA (197 aa)). The 82-residue stretch at 9–90 (LELFSKKTVQ…EDEYLIGYLA (82 aa)) folds into the Cytochrome b5 heme-binding domain. Residues His45 and His72 each contribute to the heme site. The helical transmembrane segment at 198-216 (WWVVPVAWLPVVVYHMGVA) threads the bilayer. Topologically, residues 217–221 (LKNMN) are lumenal. The chain crosses the membrane as a helical span at residues 222–246 (QLFACFLFCVGVFVWTLIEYGLHRF). His244, His249, His268, His271, and His272 together coordinate Zn(2+). Over 247 to 284 (LFHFDDWLPESNIAFATHFLLHGCHHYLPMDKYRLVMP) the chain is Cytoplasmic. Residues 285 to 302 (PTLFVILCAPFYKLVFAL) traverse the membrane as a helical segment. Residues 303–304 (LP) lie on the Lumenal side of the membrane. The chain crosses the membrane as a helical span at residues 305–328 (LYWAYAGFAGGLFGYVCYDECHFF). 5 residues coordinate Zn(2+): His326, His330, His345, His348, and His349. The Cytoplasmic segment spans residues 329–384 (LHHSKLPPFMRKLKKYHLEHHYKNYQLGFGVTSWFWDEVFGTYLGPDAPLSKMKYE).

The protein belongs to the sterol desaturase family. SCS7 subfamily. Zn(2+) serves as cofactor.

The protein localises to the endoplasmic reticulum membrane. It catalyses the reaction an N-(1,2 saturated acyl)-(4R)-hydroxysphinganine + 2 Fe(II)-[cytochrome b5] + O2 + 2 H(+) = an N-(2R-hydroxyacyl)-4R-hydroxysphinganine + 2 Fe(III)-[cytochrome b5] + H2O. It carries out the reaction an N-(1,2-saturated acyl)sphinganine + 2 Fe(II)-[cytochrome b5] + O2 + 2 H(+) = an N-[(2'R)-hydroxyacyl]sphinganine + 2 Fe(III)-[cytochrome b5] + H2O. The catalysed reaction is N-hexacosanoyl-(4R)-hydroxysphinganine + 2 Fe(II)-[cytochrome b5] + O2 + 2 H(+) = N-(2-hydroxyhexacosanyl)-(4R)-hydroxysphinganine + 2 Fe(III)-[cytochrome b5] + H2O. The protein operates within sphingolipid metabolism. Functionally, ceramide hydroxylase involved in the hydroxylation of sphingolipid-associated very long chain fatty acids. Postulated to hydroxylate the very long chain fatty acid of dihydroceramides and phytoceramides at C-2. The polypeptide is Ceramide very long chain fatty acid hydroxylase SCS7 (Saccharomyces cerevisiae (strain ATCC 204508 / S288c) (Baker's yeast)).